An 809-amino-acid chain; its full sequence is Bifunctional enzyme MurC/Ddl (809 aa).

Positions 1 to 450 (MKGTPQYHFI…GEALKDFNPK (450 aa)) are UDP-N-acetylmuramate--alanine ligase. Residues 111-117 (GSHGKTG) and 606-661 (IETF…SREI) each bind ATP. Residues 451–809 (KLSIGLVCGG…FTKEQDLVKR (359 aa)) are D-alanine--D-alanine ligase. One can recognise an ATP-grasp domain in the interval 573-784 (KRIASAVGVP…QEQIVDHFII (212 aa)). Mg(2+)-binding residues include aspartate 738, glutamate 751, and asparagine 753.

In the N-terminal section; belongs to the MurCDEF family. The protein in the C-terminal section; belongs to the D-alanine--D-alanine ligase family. Mg(2+) is required as a cofactor. The cofactor is Mn(2+).

It is found in the cytoplasm. It catalyses the reaction UDP-N-acetyl-alpha-D-muramate + L-alanine + ATP = UDP-N-acetyl-alpha-D-muramoyl-L-alanine + ADP + phosphate + H(+). The enzyme catalyses 2 D-alanine + ATP = D-alanyl-D-alanine + ADP + phosphate + H(+). It participates in cell wall biogenesis; peptidoglycan biosynthesis. In terms of biological role, cell wall formation. In Chlamydia pneumoniae (Chlamydophila pneumoniae), this protein is Bifunctional enzyme MurC/Ddl (murC/ddl).